The sequence spans 62 residues: Bowman-Birk type proteinase inhibitor (62 aa).

Intrachain disulfides connect C8–C61, C9–C24, C12–C57, C14–C22, C31–C38, C35–C50, and C40–C48.

In terms of assembly, forms a monomer at protein concentrations of below 1 mM. At concentrations of above 2 mM, self-associates.

Its function is as follows. Inhibits trypsin but not chymotrypsin. Inhibits the trypsin-like proteinase activity present in larvae of the crop pests Adoxophyes orana, Hyphantria cunea, Lobesia botrana and Ostrinia nubilalis. The sequence is that of Bowman-Birk type proteinase inhibitor from Medicago scutellata (Snail medic).